The following is an 89-amino-acid chain: Small ribosomal subunit protein uS15 (89 aa).

It belongs to the universal ribosomal protein uS15 family. Part of the 30S ribosomal subunit. Forms a bridge to the 50S subunit in the 70S ribosome, contacting the 23S rRNA.

In terms of biological role, one of the primary rRNA binding proteins, it binds directly to 16S rRNA where it helps nucleate assembly of the platform of the 30S subunit by binding and bridging several RNA helices of the 16S rRNA. Its function is as follows. Forms an intersubunit bridge (bridge B4) with the 23S rRNA of the 50S subunit in the ribosome. The chain is Small ribosomal subunit protein uS15 from Lactobacillus helveticus (strain DPC 4571).